The primary structure comprises 51 residues: Sperm protamine P1 (51 aa).

2 disulfides stabilise this stretch: Cys-7/Cys-15 and Cys-40/Cys-48.

This sequence belongs to the protamine P1 family. Cross-linked by interchain disulfide bonds around the DNA-helix. As to expression, testis.

It localises to the nucleus. It is found in the chromosome. In terms of biological role, protamines substitute for histones in the chromatin of sperm during the haploid phase of spermatogenesis. They compact sperm DNA into a highly condensed, stable and inactive complex. The sequence is that of Sperm protamine P1 (PRM1) from Capra hircus (Goat).